Here is a 319-residue protein sequence, read N- to C-terminus: Chromoplast-specific carotenoid-associated protein C1, chromoplastic (319 aa).

The N-terminal 55 residues, 1–55, are a transit peptide targeting the chromoplast; sequence MTSIAFWNAFTVNPFPAAARRSPPPLTPFTSGALSPARKPRILEISHPRTLPSFR.

This sequence belongs to the PAP/fibrillin family. Expressed in flower buds and floral lip tissues. Not detected in roots and leaves. Specifically expressed in conical papillate cells of adaxial epidermis of lip tissues.

It localises to the plastid. The protein localises to the chromoplast. Functionally, may be involved in carotenoid sequestration within chromoplasts. The polypeptide is Chromoplast-specific carotenoid-associated protein C1, chromoplastic (CHRC1) (Oncidium hybrid cultivar (Orchid)).